The sequence spans 96 residues: Co-chaperonin GroES (96 aa).

The protein belongs to the GroES chaperonin family. As to quaternary structure, heptamer of 7 subunits arranged in a ring. Interacts with the chaperonin GroEL.

It is found in the cytoplasm. Functionally, together with the chaperonin GroEL, plays an essential role in assisting protein folding. The GroEL-GroES system forms a nano-cage that allows encapsulation of the non-native substrate proteins and provides a physical environment optimized to promote and accelerate protein folding. GroES binds to the apical surface of the GroEL ring, thereby capping the opening of the GroEL channel. The polypeptide is Co-chaperonin GroES (Aliivibrio fischeri (strain ATCC 700601 / ES114) (Vibrio fischeri)).